Here is a 265-residue protein sequence, read N- to C-terminus: Pro-opiomelanocortin (265 aa).

The first 26 residues, 1-26, serve as a signal peptide directing secretion; the sequence is MPRLCSSRSGALLLALLLQASMEVRG. 2 disulfides stabilise this stretch: Cys-28-Cys-50 and Cys-34-Cys-46. A glycan (O-linked (GalNAc...) threonine) is linked at Thr-71. At Phe-87 the chain carries Phenylalanine amide. The tract at residues 89–138 is disordered; sequence RRNGSSSSGVGGAAQKREEEVAVGEGPGPRGDDAETGPREDKRSYSMEHF. Asn-91 is a glycosylation site (N-linked (GlcNAc...) asparagine). A propeptide spanning residues 106-129 is cleaved from the precursor; that stretch reads EEEVAVGEGPGPRGDDAETGPRED. Over residues 118-138 the composition is skewed to basic and acidic residues; that stretch reads RGDDAETGPREDKRSYSMEHF. Ser-132 carries the N-acetylserine; in Corticotropin modification. At Val-144 the chain carries Valine amide. Position 162 is a phosphoserine (Ser-162). A Pyrrolidone carboxylic acid (Glu); partial modification is found at Glu-173. Tyr-200 is modified (sulfotyrosine). Residues 209-240 form a disordered region; it reads EAAEKKDSGPYKMEHFRWGSPPKDKRYGGFMT. Basic and acidic residues predominate over residues 210 to 235; the sequence is AAEKKDSGPYKMEHFRWGSPPKDKRY.

It belongs to the POMC family. Post-translationally, specific enzymatic cleavages at paired basic residues yield the different active peptides. As to expression, ACTH and MSH are produced by the pituitary gland.

It localises to the secreted. In terms of biological role, stimulates the adrenal glands to release cortisol. Its function is as follows. Anorexigenic peptide. Increases the pigmentation of skin by increasing melanin production in melanocytes. Functionally, endogenous orexigenic opiate. Endogenous opiate. The polypeptide is Pro-opiomelanocortin (POMC) (Bos taurus (Bovine)).